The primary structure comprises 312 residues: MAVSTIFSQDSNSKRLLIAFAITTLFMVTEAIGGWLSGSLALLADAGHMLTDSAALFIALMAVHFSQRKPDPRHTFGYLRLTTLAAFVNAAALLLIVILIVWEAVHRFFSPHEVMGTPMLIIAIAGLLANIFCFWILHKGEEEKNINVRAAALHVLSDLLGSVGAMIAAIVILTTGWTPIDPILSVLVSVLILRSAWRLLKESFHELLEGAPQEIDINKLRKDLCTNIYEVRNIHHVHLWQVGEQRLMTLHAQVIPPLDHDALLQRIQDYLLHHYRISHATVQMEYQHCGTPDCGINQAAPADGHHRHHHHE.

6 helical membrane-spanning segments follow: residues 16-36 (LLIAFAITTLFMVTEAIGGWL), 40-60 (LALLADAGHMLTDSAALFIAL), 81-101 (LTTLAAFVNAAALLLIVILIV), 117-137 (TPMLIIAIAGLLANIFCFWIL), 153-173 (LHVLSDLLGSVGAMIAAIVIL), and 177-197 (WTPIDPILSVLVSVLILRSAW).

Belongs to the cation diffusion facilitator (CDF) transporter (TC 2.A.4) family. SLC30A subfamily.

It localises to the cell inner membrane. Involved in zinc efflux across the cytoplasmic membrane, thus reducing zinc accumulation in the cytoplasm and rendering bacteria more resistant to zinc. It may contribute to zinc homeostasis at low concentrations of zinc. In Yersinia pestis, this protein is Zinc transporter ZitB.